The following is a 261-amino-acid chain: Small ribosomal subunit protein eS1 (261 aa).

A compositionally biased stretch (basic residues) spans 1 to 18 (MAVGKNKRISKGKKGGKK). The disordered stretch occupies residues 1-21 (MAVGKNKRISKGKKGGKKKAT).

This sequence belongs to the eukaryotic ribosomal protein eS1 family. Component of the small ribosomal subunit. Mature ribosomes consist of a small (40S) and a large (60S) subunit. The 40S subunit contains about 33 different proteins and 1 molecule of RNA (18S). The 60S subunit contains about 49 different proteins and 3 molecules of RNA (25S, 5.8S and 5S).

It localises to the cytoplasm. This Daucus carota (Wild carrot) protein is Small ribosomal subunit protein eS1 (cyc07).